The chain runs to 320 residues: Cell-cell adhesion glycoprotein 64 (320 aa).

An N-terminal signal peptide occupies residues 1 to 19; that stretch reads MNKFITLFVLLASVSVAMS. 9 cysteine pairs are disulfide-bonded: Cys39/Cys57, Cys67/Cys79, Cys73/Cys86, Cys98/Cys110, Cys104/Cys115, Cys123/Cys138, Cys132/Cys147, Cys157/Cys171, and Cys165/Cys176. N-linked (GlcNAc...) asparagine glycosylation occurs at Asn49. N-linked (GlcNAc...) asparagine glycosylation is present at Asn80. Residues Asn141 and Asn158 are each glycosylated (N-linked (GlcNAc...) asparagine). Asn187 carries N-linked (GlcNAc...) asparagine glycosylation. Cystine bridges form between Cys188–Cys202 and Cys194–Cys207. A glycan (N-linked (GlcNAc...) asparagine) is linked at Asn216. 4 cysteine pairs are disulfide-bonded: Cys226/Cys246, Cys232/Cys234, Cys266/Cys285, and Cys270/Cys281. Ser298 is lipidated: GPI-like-anchor amidated serine. A propeptide spans 299–320 (removed in mature form); it reads SATTIAFNAFVVFAIVLSVLLF.

Contains 18 disulfide bonds. Post-translationally, the GPI-like-anchor contains a phosphoceramide group, rather than a phosphatidyl group.

It localises to the cell membrane. In terms of biological role, cell-cell adhesion during development. The chain is Cell-cell adhesion glycoprotein 64 from Heterostelium pallidum (Cellular slime mold).